Here is a 157-residue protein sequence, read N- to C-terminus: 2-C-methyl-D-erythritol 2,4-cyclodiphosphate synthase (157 aa).

Positions 8 and 10 each coordinate a divalent metal cation. Residues 8-10 (DVH) and 34-35 (HS) contribute to the 4-CDP-2-C-methyl-D-erythritol 2-phosphate site. An a divalent metal cation-binding site is contributed by histidine 42. 4-CDP-2-C-methyl-D-erythritol 2-phosphate-binding positions include 56–58 (DIG), 61–65 (FPDTD), 100–106 (AQAPKMA), 132–135 (TTTE), phenylalanine 139, and arginine 142.

The protein belongs to the IspF family. As to quaternary structure, homotrimer. It depends on a divalent metal cation as a cofactor.

It carries out the reaction 4-CDP-2-C-methyl-D-erythritol 2-phosphate = 2-C-methyl-D-erythritol 2,4-cyclic diphosphate + CMP. Its pathway is isoprenoid biosynthesis; isopentenyl diphosphate biosynthesis via DXP pathway; isopentenyl diphosphate from 1-deoxy-D-xylulose 5-phosphate: step 4/6. Involved in the biosynthesis of isopentenyl diphosphate (IPP) and dimethylallyl diphosphate (DMAPP), two major building blocks of isoprenoid compounds. Catalyzes the conversion of 4-diphosphocytidyl-2-C-methyl-D-erythritol 2-phosphate (CDP-ME2P) to 2-C-methyl-D-erythritol 2,4-cyclodiphosphate (ME-CPP) with a corresponding release of cytidine 5-monophosphate (CMP). In Pseudomonas syringae pv. syringae (strain B728a), this protein is 2-C-methyl-D-erythritol 2,4-cyclodiphosphate synthase.